We begin with the raw amino-acid sequence, 327 residues long: Ribosomal RNA small subunit methyltransferase H (327 aa).

Residues Gly-36–His-38, Asp-55, Leu-89, Asp-103, and Gln-110 contribute to the S-adenosyl-L-methionine site. The segment at Gly-286 to Arg-327 is disordered.

Belongs to the methyltransferase superfamily. RsmH family.

Its subcellular location is the cytoplasm. It catalyses the reaction cytidine(1402) in 16S rRNA + S-adenosyl-L-methionine = N(4)-methylcytidine(1402) in 16S rRNA + S-adenosyl-L-homocysteine + H(+). Specifically methylates the N4 position of cytidine in position 1402 (C1402) of 16S rRNA. The polypeptide is Ribosomal RNA small subunit methyltransferase H (Parafrankia sp. (strain EAN1pec)).